A 191-amino-acid chain; its full sequence is MSIFRFSQREIIDLTISVLAIAFIFSYPNFSILVFIISLIAVGSGFIFHELMHRTVARKYGAWSEFRAWYEGLILGFILKLVFGATFIAPGAVYIYKDYLTPEENGKIALAGPLTNVALAFVFFILMLIFKPGSLLYWIGIFGFHINLFLAGFNMLPIPPFDGEKVLKWNPFIWAIVGLPLIGYMLYMMFW.

A helical membrane pass occupies residues 20–40 (AIAFIFSYPNFSILVFIISLI). Position 49 (His49) interacts with Zn(2+). Glu50 is an active-site residue. His53 contributes to the Zn(2+) binding site. The next 4 membrane-spanning stretches (helical) occupy residues 73–93 (LILG…PGAV), 110–130 (LAGP…MLIF), 133–153 (GSLL…LAGF), and 171–191 (PFIW…MMFW).

Belongs to the peptidase M50B family. Requires Zn(2+) as cofactor.

It localises to the cell membrane. The chain is Putative zinc metalloprotease MJ0611 from Methanocaldococcus jannaschii (strain ATCC 43067 / DSM 2661 / JAL-1 / JCM 10045 / NBRC 100440) (Methanococcus jannaschii).